Reading from the N-terminus, the 38-residue chain is Large ribosomal subunit protein bL36 (38 aa).

It belongs to the bacterial ribosomal protein bL36 family.

In Buchnera aphidicola subsp. Acyrthosiphon pisum (strain 5A), this protein is Large ribosomal subunit protein bL36.